The chain runs to 512 residues: rRNA N(6)-adenosine-methyltransferase ZCCHC4 (512 aa).

Residues Cys39, His41, Cys63, Cys72, Cys124, Cys127, His139, and His142 each contribute to the Zn(2+) site. The GRF-type zinc-finger motif lies at 39-81; it reads CPHGPTLLFVKVNQGKEETRKFYACSACRDRKDCNFFQWEDEK. S-adenosyl-L-methionine contacts are provided by residues 171 to 174, Arg201, Asp223, 241 to 242, and Asp274; these read QYLF and NM. The interval 335 to 355 is regulatory loop; sequence QVDYDNHALYKHGKTGRKQSP. Zn(2+) is bound by residues Cys378, Cys381, His391, Cys392, Cys395, Cys398, His408, Cys409, Cys412, Cys415, His422, Cys423, Cys426, Cys429, His434, and Cys436. Residues 393–445 enclose the DHHC domain; that stretch reads VHCNSCTSKDGRKWSHCFLCKKCVKPSWIHCNTCNRCALPDHSCLGPKDGCFI. The CCHC-type zinc finger occupies 441-458; that stretch reads DGCFICGALDHKRSNCPN.

Belongs to the ZCCHC4 family. As to quaternary structure, interacts with components of the ASC-1 complex TRIP4, ASCC1, ASCC2 and ASCC3. Interact with AHCYL1 and AHCYL2. Interact with YTHDC2.

The protein resides in the cytoplasm. It localises to the nucleus. The protein localises to the nucleolus. It catalyses the reaction adenosine(4220) in 28S rRNA + S-adenosyl-L-methionine = N(6)-methyladenosine(4220) in 28S rRNA + S-adenosyl-L-homocysteine + H(+). RRNA N6-methyltransferase that specifically methylates the adenine in position 4220 of 28S rRNA. N6-methylation of adenine(4220) in 28S rRNA is required for translation. In Mus musculus (Mouse), this protein is rRNA N(6)-adenosine-methyltransferase ZCCHC4.